The primary structure comprises 596 residues: Arginine--tRNA ligase (596 aa).

The 'HIGH' region signature appears at 128–138; the sequence is ANPTSSLHVGH.

The protein belongs to the class-I aminoacyl-tRNA synthetase family. Monomer.

The protein localises to the cytoplasm. The catalysed reaction is tRNA(Arg) + L-arginine + ATP = L-arginyl-tRNA(Arg) + AMP + diphosphate. This Acinetobacter baumannii (strain AB307-0294) protein is Arginine--tRNA ligase.